Reading from the N-terminus, the 166-residue chain is Heavy metal-associated isoprenylated plant protein 45 (166 aa).

The HMA domain occupies 15–78 (LSIVELLVDM…MVKRTGRTAE (64 aa)). A metal cation is bound by residues cysteine 26 and cysteine 29. Residue cysteine 163 is modified to Cysteine methyl ester. Cysteine 163 is lipidated: S-farnesyl cysteine. A propeptide spans 164–166 (TIM) (removed in mature form).

It belongs to the HIPP family.

Functionally, heavy-metal-binding protein. The polypeptide is Heavy metal-associated isoprenylated plant protein 45 (Arabidopsis thaliana (Mouse-ear cress)).